The primary structure comprises 265 residues: Hydroxyethylthiazole kinase (265 aa).

A substrate-binding site is contributed by Met50. ATP is bound by residues Arg125 and Thr171. Gly198 is a binding site for substrate.

Belongs to the Thz kinase family. Requires Mg(2+) as cofactor.

The catalysed reaction is 5-(2-hydroxyethyl)-4-methylthiazole + ATP = 4-methyl-5-(2-phosphooxyethyl)-thiazole + ADP + H(+). The protein operates within cofactor biosynthesis; thiamine diphosphate biosynthesis; 4-methyl-5-(2-phosphoethyl)-thiazole from 5-(2-hydroxyethyl)-4-methylthiazole: step 1/1. In terms of biological role, catalyzes the phosphorylation of the hydroxyl group of 4-methyl-5-beta-hydroxyethylthiazole (THZ). In Salmonella choleraesuis (strain SC-B67), this protein is Hydroxyethylthiazole kinase.